The sequence spans 356 residues: Phosphoribosylformylglycinamidine cyclo-ligase (356 aa).

It belongs to the AIR synthase family.

The protein localises to the cytoplasm. It carries out the reaction 2-formamido-N(1)-(5-O-phospho-beta-D-ribosyl)acetamidine + ATP = 5-amino-1-(5-phospho-beta-D-ribosyl)imidazole + ADP + phosphate + H(+). It functions in the pathway purine metabolism; IMP biosynthesis via de novo pathway; 5-amino-1-(5-phospho-D-ribosyl)imidazole from N(2)-formyl-N(1)-(5-phospho-D-ribosyl)glycinamide: step 2/2. This Rhizobium meliloti (strain 1021) (Ensifer meliloti) protein is Phosphoribosylformylglycinamidine cyclo-ligase.